A 245-amino-acid chain; its full sequence is 1-(5-phosphoribosyl)-5-[(5-phosphoribosylamino)methylideneamino] imidazole-4-carboxamide isomerase (245 aa).

Asp-7 acts as the Proton acceptor in catalysis. Catalysis depends on Asp-129, which acts as the Proton donor.

It belongs to the HisA/HisF family.

Its subcellular location is the cytoplasm. It carries out the reaction 1-(5-phospho-beta-D-ribosyl)-5-[(5-phospho-beta-D-ribosylamino)methylideneamino]imidazole-4-carboxamide = 5-[(5-phospho-1-deoxy-D-ribulos-1-ylimino)methylamino]-1-(5-phospho-beta-D-ribosyl)imidazole-4-carboxamide. Its pathway is amino-acid biosynthesis; L-histidine biosynthesis; L-histidine from 5-phospho-alpha-D-ribose 1-diphosphate: step 4/9. The protein is 1-(5-phosphoribosyl)-5-[(5-phosphoribosylamino)methylideneamino] imidazole-4-carboxamide isomerase of Shewanella sp. (strain MR-7).